Consider the following 126-residue polypeptide: MARIAGVDLPRRKHVAYALPYLFGIGRTLALQICEKTNIPQNKRVEELSDAEVKAIRDLLDAEYKVEGDLRREVQLNIKRLMDLGCYRGLRHRRGLPANGQRTHTNARTRKGPRKGMLQRRPAATK.

Residues 92-126 (HRRGLPANGQRTHTNARTRKGPRKGMLQRRPAATK) are disordered. The span at 105 to 118 (TNARTRKGPRKGML) shows a compositional bias: basic residues.

It belongs to the universal ribosomal protein uS13 family. In terms of assembly, part of the 30S ribosomal subunit. Forms a loose heterodimer with protein S19. Forms two bridges to the 50S subunit in the 70S ribosome.

Located at the top of the head of the 30S subunit, it contacts several helices of the 16S rRNA. In the 70S ribosome it contacts the 23S rRNA (bridge B1a) and protein L5 of the 50S subunit (bridge B1b), connecting the 2 subunits; these bridges are implicated in subunit movement. Contacts the tRNAs in the A and P-sites. This chain is Small ribosomal subunit protein uS13, found in Sorangium cellulosum (strain So ce56) (Polyangium cellulosum (strain So ce56)).